The primary structure comprises 372 residues: Glutamate 5-kinase (372 aa).

Lys-14 lines the ATP pocket. Substrate contacts are provided by Ser-54, Asp-141, and Asn-153. 173-174 is an ATP binding site; that stretch reads TD. A PUA domain is found at 280–358; the sequence is RGTLVLDAGA…DAIESLLGYS (79 aa).

It belongs to the glutamate 5-kinase family.

The protein resides in the cytoplasm. The catalysed reaction is L-glutamate + ATP = L-glutamyl 5-phosphate + ADP. It functions in the pathway amino-acid biosynthesis; L-proline biosynthesis; L-glutamate 5-semialdehyde from L-glutamate: step 1/2. Functionally, catalyzes the transfer of a phosphate group to glutamate to form L-glutamate 5-phosphate. The protein is Glutamate 5-kinase of Pseudomonas putida (strain W619).